The sequence spans 151 residues: MNIFKQTCVGAFAVIFGATSIAPTMAAPLNLERPVINHNVEQVRDHRRPPRHYNGHRPHRPGYWNGHRGYRHYRHGYRRYNDGWWYPLAAFGAGAIIGGAVSQPRPVYRAPRMSNAHVQWCYNRYKSYRSSDNTFQPYNGPRRQCYSPYSR.

The signal sequence occupies residues 1–26 (MNIFKQTCVGAFAVIFGATSIAPTMA). The chain crosses the membrane as a helical span at residues 83-103 (GWWYPLAAFGAGAIIGGAVSQ).

It belongs to the BA14k family.

The protein localises to the cell membrane. Functionally, has immunoglobulin-binding and hemagglutination properties, and can bind to mannose. Essential for virulence. May be involved in LPS biosynthesis or polysaccharide transport. The sequence is that of Lectin-like protein BA14k from Brucella anthropi (strain ATCC 49188 / DSM 6882 / CCUG 24695 / JCM 21032 / LMG 3331 / NBRC 15819 / NCTC 12168 / Alc 37) (Ochrobactrum anthropi).